An 86-amino-acid polypeptide reads, in one-letter code: Putative defensin-like protein 189 (86 aa).

A signal peptide spans 1-28; that stretch reads MKMAKSANEIGFITCLVVFLVLTGQSNG. 4 disulfide bridges follow: Cys-39–Cys-85, Cys-52–Cys-71, Cys-57–Cys-80, and Cys-61–Cys-82.

It belongs to the DEFL family.

It is found in the secreted. This is Putative defensin-like protein 189 from Arabidopsis thaliana (Mouse-ear cress).